Here is a 353-residue protein sequence, read N- to C-terminus: UPF0283 membrane protein YcjF (353 aa).

The next 3 helical transmembrane spans lie at 70 to 90 (MVMGGLALFGASVVGQGVQWT), 100 to 120 (VALGGCAAGALIIGAGVGSVV), and 213 to 233 (ESTLMIAVSPLALVDMAFIAW).

The protein belongs to the UPF0283 family.

The protein resides in the cell inner membrane. The chain is UPF0283 membrane protein YcjF from Shigella sonnei (strain Ss046).